A 465-amino-acid polypeptide reads, in one-letter code: Putative adhesin P1-like protein MPN_286 (465 aa).

Disordered regions lie at residues 9 to 48 (GNGH…STFS), 59 to 78 (QGTL…PKWP), and 93 to 167 (WRND…LPPN). Residues 21–37 (SNSSTSGVTTQGQQSQN) show a composition bias toward low complexity. Polar residues predominate over residues 38 to 48 (ASGTEPASTFS). Positions 111 to 131 (TSATGSGQQGSSSGTTNSAGN) are enriched in low complexity. Over residues 135-144 (LKQDKVDKSG) the composition is skewed to basic and acidic residues. Residues 145 to 156 (DSVTVAETTSGD) show a composition bias toward polar residues. Low complexity predominate over residues 157-167 (NLTNYTNLPPN).

The protein belongs to the adhesin P1 family.

This Mycoplasma pneumoniae (strain ATCC 29342 / M129 / Subtype 1) (Mycoplasmoides pneumoniae) protein is Putative adhesin P1-like protein MPN_286.